The sequence spans 332 residues: uncharacterized protein (332 aa).

Residues Met1–Gly26 form the signal peptide.

The protein resides in the endoplasmic reticulum. This is an uncharacterized protein from Schizosaccharomyces pombe (strain 972 / ATCC 24843) (Fission yeast).